Here is a 302-residue protein sequence, read N- to C-terminus: Fluoroacetate dehalogenase (302 aa).

An AB hydrolase-1 domain is found at 32 to 270; it reads PPLLLLHGFP…LDVWRKWASD (239 aa). Residue D110 is the Nucleophile of the active site. Fluoroacetate contacts are provided by R111, R114, H155, W156, and Y219. H280 acts as the Proton acceptor in catalysis.

The protein belongs to the AB hydrolase superfamily. Epoxide hydrolase family. Homodimer.

The catalysed reaction is a haloacetate + H2O = a halide anion + glycolate + H(+). The enzyme catalyses fluoroacetate + H2O = fluoride + glycolate + H(+). It carries out the reaction chloroacetate + H2O = glycolate + chloride + H(+). Functionally, catalyzes the hydrolytic defluorination of fluoroacetate to produce glycolate. Has lower activity towards chloroacetate and bromoacetate. This chain is Fluoroacetate dehalogenase, found in Rhodopseudomonas palustris (strain ATCC BAA-98 / CGA009).